The chain runs to 114 residues: NADH-quinone oxidoreductase subunit K 2 (114 aa).

3 helical membrane passes run 1-21 (MIVPFGHVLLLAGALFGLGVF), 29-49 (LIMIVLGVEIMLNAASIAFIG), and 62-82 (FVLFILAVAATEVSIGLAIIV).

The protein belongs to the complex I subunit 4L family. In terms of assembly, NDH-1 is composed of 14 different subunits. Subunits NuoA, H, J, K, L, M, N constitute the membrane sector of the complex.

It localises to the cell inner membrane. The enzyme catalyses a quinone + NADH + 5 H(+)(in) = a quinol + NAD(+) + 4 H(+)(out). NDH-1 shuttles electrons from NADH, via FMN and iron-sulfur (Fe-S) centers, to quinones in the respiratory chain. The immediate electron acceptor for the enzyme in this species is believed to be ubiquinone. Couples the redox reaction to proton translocation (for every two electrons transferred, four hydrogen ions are translocated across the cytoplasmic membrane), and thus conserves the redox energy in a proton gradient. The protein is NADH-quinone oxidoreductase subunit K 2 of Syntrophobacter fumaroxidans (strain DSM 10017 / MPOB).